The following is an 85-amino-acid chain: Metallothionein-like protein 4B (85 aa).

Residues 1-20 (MADTGKGSASASCNDRCGCP) form a disordered region.

Belongs to the metallothionein superfamily. Type 15 family. Expressed specifically in seeds.

It localises to the cytoplasm. It is found in the nucleus. The protein localises to the cell membrane. Metallothioneins have a high content of cysteine residues that bind various heavy metals. Functions as a metal chelator of copper (Cu) and zinc (Zn). Plays a role in storing and distributing Zn ion in seed. The sequence is that of Metallothionein-like protein 4B (MT4B) from Arabidopsis thaliana (Mouse-ear cress).